Here is a 104-residue protein sequence, read N- to C-terminus: uncharacterized protein (104 aa).

Disordered stretches follow at residues 1–48 (MLRR…NNQP) and 66–104 (QENT…RRCS).

This is an uncharacterized protein from Saccharomyces cerevisiae (strain ATCC 204508 / S288c) (Baker's yeast).